Reading from the N-terminus, the 361-residue chain is MAAPGPASRFWCSCPEVPSATFFTALLSLLVSGPRLFLLQPPLAPSGLSLRSEALRNWQVYRLVTYIFVYENPVSLLCGAIIIWRFAGNFERTVGTVRHCFFTLIFTVFSAIIYLSFESVSSLSKLGEVEDARGFTPVAFAMLGVTSVRSRMRRALVFGVVVPSVLVPWLLLCASWLIPQTSFLSNVSGLLIGLSYGLTYCYSLDLSERVALKLDQKFPFSLMRRIPLFKYISGSSAERRAAQSRRLNPAPGSYPTQSCHPHLTPSYPVTQMQHASGQKLASWPPGHMPSLPPYQPASGLCYVQNHFGPNPNASSVYPASAGTSQGVQPPSPISCPGTVYSGALGTPGATGSKESSKVAMP.

5 helical membrane-spanning segments follow: residues 19–39, 63–83, 100–120, 158–178, and 182–202; these read SATF…LFLL, LVTY…AIII, CFFT…FESV, FGVV…SWLI, and SFLS…TYCY. Disordered regions lie at residues 265–287 and 318–361; these read PSYP…PPGH and PASA…VAMP. Composition is skewed to polar residues over residues 267 to 276 and 318 to 328; these read YPVTQMQHAS and PASAGTSQGVQ.

Belongs to the peptidase S54 family. In terms of assembly, might form homotrimers; these trimers are only formed in retina. As to expression, widely expressed, including in retina and brain (at protein level), as well as in kidney, testis and ovary. Expressed in all layers of the retina, including inner segments of photoreceptor cells and ganglion cells (at protein level).

It localises to the golgi apparatus. The protein resides in the cis-Golgi network membrane. The protein is Rhomboid domain-containing protein 2 (Rhbdd2) of Mus musculus (Mouse).